The following is a 79-amino-acid chain: Small proline-rich protein 4 (79 aa).

Over residues 1-26 (MSSQQQQRQQQQCPPQRAQQQQVKQP) the composition is skewed to low complexity. A disordered region spans residues 1 to 79 (MSSQQQQRQQ…AQQASKSKQK (79 aa)). The segment covering 66-79 (KCPSAQQASKSKQK) has biased composition (polar residues).

It belongs to the cornifin (SPRR) family. Cross-linked to membrane proteins by transglutaminase.

The protein localises to the cytoplasm. Its subcellular location is the cell cortex. Cross-linked envelope protein of keratinocytes. Involved in UV-induced cornification. The sequence is that of Small proline-rich protein 4 (SPRR4) from Homo sapiens (Human).